Consider the following 475-residue polypeptide: Ribulose bisphosphate carboxylase large chain (475 aa).

A propeptide spanning residues 1–2 is cleaved from the precursor; the sequence is MS. Pro-3 is subject to N-acetylproline. Lys-14 is subject to N6,N6,N6-trimethyllysine. Substrate is bound by residues Asn-123 and Thr-173. Catalysis depends on Lys-175, which acts as the Proton acceptor. Residue Lys-177 coordinates substrate. Mg(2+) is bound by residues Lys-201, Asp-203, and Glu-204. Residue Lys-201 is modified to N6-carboxylysine. His-294 acts as the Proton acceptor in catalysis. Arg-295, His-327, and Ser-379 together coordinate substrate.

It belongs to the RuBisCO large chain family. Type I subfamily. Heterohexadecamer of 8 large chains and 8 small chains; disulfide-linked. The disulfide link is formed within the large subunit homodimers. It depends on Mg(2+) as a cofactor. In terms of processing, the disulfide bond which can form in the large chain dimeric partners within the hexadecamer appears to be associated with oxidative stress and protein turnover.

It localises to the plastid. Its subcellular location is the chloroplast. It catalyses the reaction 2 (2R)-3-phosphoglycerate + 2 H(+) = D-ribulose 1,5-bisphosphate + CO2 + H2O. It carries out the reaction D-ribulose 1,5-bisphosphate + O2 = 2-phosphoglycolate + (2R)-3-phosphoglycerate + 2 H(+). RuBisCO catalyzes two reactions: the carboxylation of D-ribulose 1,5-bisphosphate, the primary event in carbon dioxide fixation, as well as the oxidative fragmentation of the pentose substrate in the photorespiration process. Both reactions occur simultaneously and in competition at the same active site. In Calycanthus floridus var. glaucus (Eastern sweetshrub), this protein is Ribulose bisphosphate carboxylase large chain.